The chain runs to 5202 residues: Usherin (5202 aa).

The signal sequence occupies residues 1–31 (MNCPVLSLGSGFLFQVIEMLIFAYFASISLT). The Extracellular portion of the chain corresponds to 32–5042 (ESRGLFPRLE…KSTEFYSELW (5011 aa)). Residues 271–517 (QDFRLYQVAL…AVDEITISGR (247 aa)) form the Laminin N-terminal domain. N-linked (GlcNAc...) asparagine glycosylation is found at Asn361 and Asn451. 40 cysteine pairs are disulfide-bonded: Cys518–Cys527, Cys520–Cys536, Cys538–Cys549, Cys552–Cys572, Cys575–Cys584, Cys577–Cys605, Cys608–Cys617, Cys620–Cys638, Cys641–Cys655, Cys643–Cys662, Cys664–Cys673, Cys676–Cys691, Cys694–Cys708, Cys696–Cys715, Cys717–Cys726, Cys729–Cys744, Cys747–Cys759, Cys749–Cys766, Cys768–Cys777, Cys780–Cys792, Cys795–Cys808, Cys797–Cys815, Cys817–Cys826, Cys829–Cys844, Cys847–Cys861, Cys849–Cys868, Cys870–Cys879, Cys882–Cys897, Cys900–Cys913, Cys902–Cys920, Cys922–Cys931, Cys934–Cys948, Cys951–Cys963, Cys953–Cys970, Cys972–Cys982, Cys985–Cys999, Cys1002–Cys1014, Cys1004–Cys1021, Cys1023–Cys1032, and Cys1035–Cys1050. Laminin EGF-like domains lie at 518-574 (CQCH…NCKP), 575-640 (CQCN…VCKP), 641-693 (CDCD…GCSP), 694-746 (CNCN…GCEP), 747-794 (CQCN…NCKA), 795-846 (CDCD…LCLP), 847-899 (CNCD…HCQM), 900-950 (CECD…GCLP), 951-1001 (CSCH…RCQP), and 1002-1052 (CNCH…GCSK). N-linked (GlcNAc...) asparagine glycosylation is found at Asn587 and Asn611. Asn650 carries N-linked (GlcNAc...) asparagine glycosylation. An N-linked (GlcNAc...) asparagine glycan is attached at Asn697. N-linked (GlcNAc...) asparagine glycosylation is found at Asn839, Asn856, and Asn862. Asn888 is a glycosylation site (N-linked (GlcNAc...) asparagine). Asn944 carries an N-linked (GlcNAc...) asparagine glycan. Residue Asn1011 is glycosylated (N-linked (GlcNAc...) asparagine). 4 Fibronectin type-III domains span residues 1058 to 1146 (PPPR…TKPG), 1148 to 1244 (PEGN…APPQ), 1245 to 1363 (RLSP…SAPV), and 1364 to 1468 (FMIP…AAPA). Residues Asn1071, Asn1151, and Asn1174 are each glycosylated (N-linked (GlcNAc...) asparagine). N-linked (GlcNAc...) asparagine glycosylation is found at Asn1379, Asn1388, Asn1479, and Asn1635. Laminin G-like domains lie at 1517-1709 (MKGI…WEGC) and 1714-1891 (NEGA…LDGC). Cys1672 and Cys1709 are disulfide-bonded. Residue Asn1779 is glycosylated (N-linked (GlcNAc...) asparagine). Cysteines 1862 and 1891 form a disulfide. Fibronectin type-III domains are found at residues 1869–1955 (TRGA…AAPQ), 1957–2054 (VPTP…TPQE), 2055–2144 (APQE…LPPE), 2145–2239 (HVDS…TDED), 2243–2330 (GVPA…APPE), 2331–2433 (GTVN…MPPG), 2437–2531 (GVLP…TAED), 2535–2622 (PVVP…TLPG), 2624–2722 (PEGI…TRPS), 2726–2819 (GVQP…THPT), 2820–2923 (VPQN…TLAG), 2927–3018 (RGAN…TCDG), 3022–3112 (GMLP…TPSD), and 3113–3209 (IPTP…CCEE). Asn1903, Asn2011, Asn2014, Asn2048, Asn2130, Asn2182, Asn2195, Asn2258, Asn2285, Asn2322, Asn2377, Asn2382, Asn2407, and Asn2413 each carry an N-linked (GlcNAc...) asparagine glycan. Residues Asn2581, Asn2584, Asn2656, Asn2710, Asn2770, and Asn2788 are each glycosylated (N-linked (GlcNAc...) asparagine). N-linked (GlcNAc...) asparagine glycosylation is found at Asn2930, Asn2937, Asn2970, Asn3032, and Asn3099. N-linked (GlcNAc...) asparagine glycans are attached at residues Asn3217, Asn3330, Asn3419, and Asn3433. Intrachain disulfides connect Cys3371–Cys3444 and Cys3399–Cys3425. Fibronectin type-III domains lie at 3403–3497 (CPAS…TKED), 3501–3589 (GVSP…TQGV), 3592–3682 (SILP…AAPE), 3684–3770 (VWVT…TPMS), 3774–3865 (EIYP…TPEA), 3866–3963 (APMD…TLEA), 3964–4067 (PPQD…SSPS), 4068–4153 (GLRN…TDEA), 4157–4261 (SQLA…TLQA), 4262–4357 (PPEG…AAPS), 4358–4445 (EVSP…ALPE), 4446–4530 (NMDS…TSPS), 4534–4630 (GMEP…TPEI), 4636–4733 (PPPH…TGPA), 4734–4827 (PPEG…THPA), and 4828–4927 (PPSG…SFTT). Asn3653, Asn3694, Asn3733, Asn3780, and Asn3849 each carry an N-linked (GlcNAc...) asparagine glycan. Residue Asn3984 is glycosylated (N-linked (GlcNAc...) asparagine). Residues Asn4202, Asn4226, Asn4317, and Asn4418 are each glycosylated (N-linked (GlcNAc...) asparagine). The segment at 4518–4541 (ILSPLVKDRTSPSAPSGMEPPKLQ) is disordered. N-linked (GlcNAc...) asparagine glycosylation is found at Asn4564, Asn4583, Asn4691, Asn4754, and Asn4800. 2 N-linked (GlcNAc...) asparagine glycosylation sites follow: Asn4943 and Asn4950. A helical membrane pass occupies residues 5043–5063 (FIVLMAMLGLILLAIFLSLIL). The Cytoplasmic segment spans residues 5064 to 5202 (QRKIHKEPYI…ERTTFTDTHL (139 aa)). Residues 5200–5202 (THL) carry the PDZ-binding motif.

In terms of assembly, interacts with collagen IV and fibronectin via its laminin EGF-like domains. Interaction with collagen may be required for stable integration into the basement membrane. Interacts with NINL. Interacts with USH1C. Component of USH2 complex, composed of ADGRV1, PDZD7, USH2A and WHRN. Interacts with ADGRV1/MASS1 (via N-terminal PDZ domain). Interacts (via the cytoplasmic region) with WHRN. Interacts (via the cytoplasmic region) with PDZD7. Interacts (via the cytoplasmic region) with VEZT and MYO7A (via MyTH4-FERM domains); the interaction associates VEZT with the USH2 complex at the stereocilia base. In terms of tissue distribution, present in the basement membrane of many, but not all tissues. Expressed in retina, cochlea, small and large intestine, pancreas, bladder, prostate, esophagus, trachea, thymus, salivary glands, placenta, ovary, fallopian tube, uterus and testis. Absent in many other tissues such as heart, lung, liver, kidney and brain. In the retina, it is present in the basement membranes in the Bruch's layer choroid capillary basement membranes, where it localizes just beneath the retinal pigment epithelial cells (at protein level). Weakly expressed. Isoform 2 is expressed in fetal eye, cochlea and heart, and at very low level in brain, CNS, intestine, skeleton, tongue, kidney and lung. Isoform 2 is not expressed in stomach and liver. In adult tissues, isoform 2 is expressed in neural retina and testis, and at low level in brain, heart, kidney and liver. Isoform 1 displays a similar pattern of expression but is expressed at very low level in fetal cochlea.

The protein resides in the cell projection. It is found in the stereocilium membrane. The protein localises to the secreted. In terms of biological role, involved in hearing and vision as member of the USH2 complex. In the inner ear, required for the maintenance of the hair bundle ankle formation, which connects growing stereocilia in developing cochlear hair cells. In retina photoreceptors, the USH2 complex is required for the maintenance of periciliary membrane complex that seems to play a role in regulating intracellular protein transport. The polypeptide is Usherin (USH2A) (Homo sapiens (Human)).